A 152-amino-acid polypeptide reads, in one-letter code: Putative aryl-alcohol dehydrogenase YFL057C (152 aa).

This sequence belongs to the aldo/keto reductase family. Aldo/keto reductase 2 subfamily.

Putative aryl-alcohol dehydrogenase. The chain is Putative aryl-alcohol dehydrogenase YFL057C from Saccharomyces cerevisiae (strain ATCC 204508 / S288c) (Baker's yeast).